Reading from the N-terminus, the 425-residue chain is Voltage-dependent calcium channel gamma-8 subunit (425 aa).

4 consecutive transmembrane segments (helical) span residues 19 to 39, 129 to 149, 158 to 178, and 208 to 228; these read VQVL…TIAI, SIFP…VAAS, IILG…IGVI, and FGGL…NIYI. Residues Ser-252 and Ser-255 each carry the phosphoserine modification. Positions 272–304 are disordered; it reads RRSRSSSRSSEPSPSRDASPGGPGGPGFASTDI. Low complexity predominate over residues 277–287; that stretch reads SSRSSEPSPSR. Residues 318 to 338 traverse the membrane as a helical segment; the sequence is VAAGLAGAGGGGGGAVGAFGG. Over residues 343–354 the composition is skewed to gly residues; that stretch reads AGGGGGGGGGAG. Disordered regions lie at residues 343–365 and 377–425; these read AGGG…ASGF and GGGV…TTPV. Positions 387–401 are enriched in pro residues; it reads PPAPPAPAPPAPSAP. Residues 412–425 show a composition bias toward polar residues; the sequence is ASNTNTLNRKTTPV.

The protein belongs to the PMP-22/EMP/MP20 family. CACNG subfamily. In terms of assembly, interacts with CACNA1C. Identified in a complex with the L-type calcium channel subunits CACNA1C, CACNA2D1 and either CACNB1 or CACNB2. Acts as an auxiliary subunit for AMPA-selective glutamate receptors (AMPARs). Found in a complex with GRIA1, GRIA2, GRIA3, GRIA4, CNIH2, CNIH3, CACNG2, CACNG3, CACNG4, CACNG5 and CACNG7. Interacts with CNIH2. Found in a complex with GRIA1, GRIA2, GRIA3, GRIA4, DLG4 and CNIH2. Post-translationally, palmitoylated. Probably palmitoylated by ZDHHC3 and ZDHHC7. Detected in heart left ventricle.

It is found in the cell membrane. Its subcellular location is the postsynaptic density membrane. Regulates the activity of L-type calcium channels that contain CACNA1C as pore-forming subunit. Regulates the trafficking and gating properties of AMPA-selective glutamate receptors (AMPARs). Promotes their targeting to the cell membrane and synapses and modulates their gating properties by slowing their rates of activation, deactivation and desensitization and by mediating their resensitization. Does not show subunit-specific AMPA receptor regulation and regulates all AMPAR subunits. This chain is Voltage-dependent calcium channel gamma-8 subunit, found in Homo sapiens (Human).